Here is a 728-residue protein sequence, read N- to C-terminus: Beta-porphyranase A (728 aa).

Positions 1 to 22 (MSYKYIFLLSAFTLGVPPGIYC) are cleaved as a signal peptide. The substrate site is built by His-53, Lys-76, Trp-78, Lys-87, His-114, and Asn-151. The active-site Proton donor is Glu-152. 4 residues coordinate substrate: His-235, Glu-279, Ser-326, and Trp-331. The active-site Nucleophile is the Glu-279. The CBM-cenC domain occupies 599 to 701 (TLQNGTFSEG…AVSFDFNSTV (103 aa)).

This sequence belongs to the glycosyl hydrolase 86 family.

It catalyses the reaction Hydrolysis of beta-D-galactopyranose-(1-&gt;4)-alpha-L-galactopyranose-6-sulfate linkages in porphyran.. In terms of biological role, cleaves the sulfated polysaccharide porphyran at the (1-&gt;4) linkages between beta-D-galactopyranose and alpha-L-galactopyranose-6-sulfate, forming mostly the disaccharide alpha-L-galactopyranose-6-sulfate-(1-&gt;3)-beta-D-galactose. Some longer oligosaccharides of even number of residues are also observed. Inactive on the non-sulfated agarose portion of the porphyran backbone. Can also use methylated galactoses. The chain is Beta-porphyranase A from Phocaeicola plebeius (strain DSM 17135 / JCM 12973 / CCUG 54634 / M2) (Bacteroides plebeius).